Reading from the N-terminus, the 889-residue chain is Phosphofurin acidic cluster sorting protein 2 (889 aa).

Disordered regions lie at residues aspartate 180–threonine 246, leucine 293–arginine 463, and serine 687–valine 740. Basic and acidic residues predominate over residues serine 343–arginine 358. 5 positions are modified to phosphoserine: serine 390, serine 416, serine 453, serine 691, and serine 694. Composition is skewed to low complexity over residues serine 687–serine 720 and proline 727–serine 737.

It belongs to the PACS family. In terms of assembly, interacts with BID and PKD2. Interacts with SIRT1. Interacts with HDAC1. Interacts with TRPV1. Interacts with WDR37. (Microbial infection) Interacts with HIV-1 Nef. As to expression, broadly expressed, with greatest levels in skeletal muscle followed by heart, brain, pancreas and testis.

It is found in the endoplasmic reticulum. The protein localises to the mitochondrion. Functionally, multifunctional sorting protein that controls the endoplasmic reticulum (ER)-mitochondria communication, including the apposition of mitochondria with the ER and ER homeostasis. In addition, in response to apoptotic inducer, translocates BIB to mitochondria, which initiates a sequence of events including the formation of mitochondrial truncated BID, the release of cytochrome c, the activation of caspase-3 thereby causing cell death. May also be involved in ion channel trafficking, directing acidic cluster-containing ion channels to distinct subcellular compartments. This is Phosphofurin acidic cluster sorting protein 2 from Homo sapiens (Human).